A 131-amino-acid polypeptide reads, in one-letter code: Small ribosomal subunit protein bS6 (131 aa).

The segment at 98-131 is disordered; sequence EASPMVKAKDERRERREDFANETSEETEAGDSEE. A compositionally biased stretch (basic and acidic residues) spans 104 to 116; sequence KAKDERRERREDF. Residues 120-131 are compositionally biased toward acidic residues; sequence TSEETEAGDSEE.

The protein belongs to the bacterial ribosomal protein bS6 family.

Binds together with bS18 to 16S ribosomal RNA. The sequence is that of Small ribosomal subunit protein bS6 from Edwardsiella ictaluri (strain 93-146).